Here is a 389-residue protein sequence, read N- to C-terminus: Calreticulin (389 aa).

An N-terminal signal peptide occupies residues 1 to 13 (MFTLFLLIALSSA). The interval 12 to 189 (SAKVYFHETF…GVEKQEGKFD (178 aa)) is N-domain. Residues Thr-20, Asn-52, and Asn-53 each coordinate Ca(2+). Cys-96 and Cys-130 are disulfide-bonded. Residues Tyr-100, Lys-102, Tyr-121, and Asp-128 each contribute to the an alpha-D-glucoside site. 7 consecutive repeat copies span residues 183–194 (KQEGKFDEDWDM), 202–213 (DPNVSKPADWVD), 219–230 (DPNDKKPEGWDD), 237–248 (DPNAKKPEEWND), 252–262 (GEWEAPTIENP), 266–276 (GEWKPKRIPNP), and 280–290 (GEWVHPQIANP). A 4 X approximate repeats region spans residues 183 to 248 (KQEGKFDEDW…NAKKPEEWND (66 aa)). Residues 190 to 301 (EDWDMLAPKE…YVYDPELYKY (112 aa)) are P-domain. Over residues 213-232 (DEKEIDDPNDKKPEGWDDIP) the composition is skewed to basic and acidic residues. Residues 213 to 256 (DEKEIDDPNDKKPEGWDDIPKTIVDPNAKKPEEWNDEDDGEWEA) are disordered. Positions 252–290 (GEWEAPTIENPEYKGEWKPKRIPNPAYKGEWVHPQIANP) are 3 X approximate repeats. The C-domain stretch occupies residues 302 to 389 (DSFAYIGIDV…IKKEENKEEL (88 aa)). Residue Asp-310 participates in an alpha-D-glucoside binding. Asp-321 serves as a coordination point for Ca(2+). Residues 329–388 (IEEAEKEAKVILERNAAEKKMRDEIKEAEKQKEEEAKKEAEKQKEEETKEEIKKEENKEE) are a coiled coil. The interval 347–389 (KKMRDEIKEAEKQKEEEAKKEAEKQKEEETKEEIKKEENKEEL) is disordered. Positions 386–389 (KEEL) match the Prevents secretion from ER motif.

It belongs to the calreticulin family. Interacts (via C-terminus) with host C1q.

It localises to the endoplasmic reticulum lumen. It is found in the cell projection. Its subcellular location is the uropodium. The protein localises to the cell surface. The protein resides in the phagocytic cup. In terms of biological role, molecular calcium-binding chaperone promoting folding, oligomeric assembly and quality control in the ER via the calreticulin/calnexin cycle. This lectin may interact transiently with almost all of the monoglucosylated glycoproteins that are synthesized in the ER. Plays a role in host cell phagocytosis, possibly by acting as a receptor for host C1q. Binding to C1q prevents the activation of the host classical complement pathway. Also, binds to apoptotic host cells independently of host C1q and collectins. The protein is Calreticulin of Entamoeba histolytica (strain ATCC 30459 / HM-1:IMSS / ABRM).